A 209-amino-acid chain; its full sequence is Regulator of G-protein signaling 1 (209 aa).

The tract at residues 19–42 is disordered; it reads FSASPKDSKEHSHSLLDDKKQKKR. The span at 24 to 38 shows a compositional bias: basic and acidic residues; that stretch reads KDSKEHSHSLLDDKK. The RGS domain occupies 85–200; it reads SLEKLLANQT…LKSNIYLNLL (116 aa).

In terms of assembly, interacts with GNAI1 and GNAQ. Detected in spleen, lymph node and intestine.

The protein resides in the cell membrane. The protein localises to the cytoplasm. Its subcellular location is the cytosol. In terms of biological role, regulates G protein-coupled receptor signaling cascades, including signaling downstream of the N-formylpeptide chemoattractant receptors and leukotriene receptors. Inhibits B cell chemotaxis toward CXCL12. Inhibits signal transduction by increasing the GTPase activity of G protein alpha subunits thereby driving them into their inactive GDP-bound form. This is Regulator of G-protein signaling 1 (Rgs1) from Mus musculus (Mouse).